The sequence spans 704 residues: CAP-Gly domain-containing linker protein 4 (704 aa).

3 ANK repeats span residues 65 to 101 (TSVS…NVND), 149 to 180 (TNMN…DVDA), and 186 to 215 (NFGT…NPAF). The 43-residue stretch at 303–345 (GTTEFASGQWAGIELDEPEGKNNGSVGRVQYFKCAPKYGIFAP) folds into the CAP-Gly 1 domain. Residues 353-479 (KDGRKTTTHT…SATSAANNSH (127 aa)) are disordered. Low complexity-rich tracts occupy residues 360–371 (THTPSTRATPHA), 423–432 (SMSSSSSSSS), and 440–461 (PKKL…SLPS). The 43-residue stretch at 504 to 546 (GTTNFAPGYWYGIELEKPHGKNDGSVGGVQYFSCSPRYGIFAP) folds into the CAP-Gly 2 domain. Serine 556 and serine 608 each carry phosphoserine. In terms of domain architecture, CAP-Gly 3 spans 643–685 (GPTDFASGIWLGLELRSAKGKNDGAVGDKRYFTCKPNYGVLVR).

The chain is CAP-Gly domain-containing linker protein 4 (Clip4) from Mus musculus (Mouse).